Here is a 440-residue protein sequence, read N- to C-terminus: Tryptophan aminotransferase-related protein 2 (440 aa).

The chain crosses the membrane as a helical span at residues 7–26 (FLSWRNMLVLSLAINFSLIL). Residues tyrosine 112, 154 to 155 (ST), asparagine 222, 242 to 245 (DLAY), 265 to 268 (TASK), and arginine 276 contribute to the pyridoxal 5'-phosphate site. Lysine 268 carries the post-translational modification N6-(pyridoxal phosphate)lysine.

Belongs to the alliinase family. Pyridoxal 5'-phosphate serves as cofactor. As to expression, expressed in roots, cotyledons and in the apical parts of hypocotyls. In roots, restricted to the provasculature of meristematic regions. Detected on the inner side of the apical hooks.

The protein resides in the membrane. It carries out the reaction L-tryptophan + 2-oxoglutarate = indole-3-pyruvate + L-glutamate. The catalysed reaction is L-tryptophan + pyruvate = indole-3-pyruvate + L-alanine. It participates in plant hormone metabolism; auxin biosynthesis. Its activity is regulated as follows. Inhibited by L-kynurenine. Its function is as follows. Involved in auxin production. Both TAA1 and TAR2 are required for maintaining proper auxin levels in roots, while TAA1, TAR1 and TAR2 are required for proper embryo patterning. Involved in the maintenance of the root stem cell niches. This Arabidopsis thaliana (Mouse-ear cress) protein is Tryptophan aminotransferase-related protein 2 (TAR2).